The primary structure comprises 625 residues: Thioredoxin domain-containing protein 6 (625 aa).

An NDK region spans residues 158–302; the sequence is KSYTVAIIKP…FFFPNFKISN (145 aa). Residues 594 to 625 form a disordered region; it reads GETPETSASDISRNAAAQGDDPEQDESKEMEE. Acidic residues predominate over residues 613–625; that stretch reads DDPEQDESKEMEE.

The protein belongs to the NDK family. As to quaternary structure, monomer and homodimer.

It is found in the cytoplasm. The protein localises to the cytoskeleton. The protein resides in the cilium axoneme. Its subcellular location is the dynein axonemal particle. Its function is as follows. May be a regulator of microtubule physiology. This chain is Thioredoxin domain-containing protein 6, found in Xenopus laevis (African clawed frog).